The chain runs to 62 residues: Prokaryotic ubiquitin-like protein Pup 2 (62 aa).

The disordered stretch occupies residues 1–34 (MRQEKPKRHGREDDEPPEPAPAGRARDTTVGDDT). The ARC ATPase binding stretch occupies residues 21 to 56 (PAGRARDTTVGDDTDELLDEIDGVLEENAVEFVRSY). Glu62 is covalently cross-linked (Isoglutamyl lysine isopeptide (Glu-Lys) (interchain with K-? in acceptor proteins)).

Belongs to the prokaryotic ubiquitin-like protein family. Strongly interacts with the proteasome-associated ATPase ARC through a hydrophobic interface; the interacting region of Pup lies in its C-terminal half. There is one Pup binding site per ARC hexamer ring.

It functions in the pathway protein degradation; proteasomal Pup-dependent pathway. In terms of biological role, protein modifier that is covalently attached to lysine residues of substrate proteins, thereby targeting them for proteasomal degradation. The tagging system is termed pupylation. This chain is Prokaryotic ubiquitin-like protein Pup 2, found in Saccharopolyspora erythraea (strain ATCC 11635 / DSM 40517 / JCM 4748 / NBRC 13426 / NCIMB 8594 / NRRL 2338).